The chain runs to 1048 residues: Self-sufficient cytochrome P450 monooxygenase CYP505E4 (1048 aa).

Heme is bound at residue Cys405. Residues 499 to 640 enclose the Flavodoxin-like domain; sequence VSFFYGSNSG…DLEVWEETNL (142 aa). Residues 505 to 509 and 584 to 616 contribute to the FMN site; these read SNSGT and VFGC…TRLA. The FAD-binding FR-type domain maps to 678-906; sequence RDLIEAKVTA…RPAKDAFHLP (229 aa).

In the N-terminal section; belongs to the cytochrome P450 family. FAD is required as a cofactor. FMN serves as cofactor. The cofactor is heme.

It carries out the reaction 2 oxidized [cytochrome P450] + NADPH = 2 reduced [cytochrome P450] + NADP(+) + H(+). The catalysed reaction is an organic molecule + reduced [NADPH--hemoprotein reductase] + O2 = an alcohol + oxidized [NADPH--hemoprotein reductase] + H2O + H(+). It catalyses the reaction dodecanoate + reduced [NADPH--hemoprotein reductase] + O2 = 5-hydroxydodecanoate + oxidized [NADPH--hemoprotein reductase] + H2O + H(+). The enzyme catalyses tetradecanoate + reduced [NADPH--hemoprotein reductase] + O2 = 7-hydroxytetradecanoate + oxidized [NADPH--hemoprotein reductase] + H2O + H(+). It carries out the reaction dodecan-1-ol + reduced [NADPH--hemoprotein reductase] + O2 = 1,5-dodecanediol + oxidized [NADPH--hemoprotein reductase] + H2O + H(+). The catalysed reaction is dodecan-1-ol + reduced [NADPH--hemoprotein reductase] + O2 = 1,4-dodecanediol + oxidized [NADPH--hemoprotein reductase] + H2O + H(+). It catalyses the reaction dodecan-1-ol + reduced [NADPH--hemoprotein reductase] + O2 = 1,6-dodecanediol + oxidized [NADPH--hemoprotein reductase] + H2O + H(+). Self-sufficient cytochrome P450 monooxygenase that catalyzes the regioselective in-chain hydroxylation of alkanes, fatty alcohols, and fatty acids at the omega-7 position. Performs hydroxylation of C10-C16 n-alkanes and C12 and C14 fatty alcohols; and thereby enables the one step biocatalytic synthesis of rare alcohols such as 5-dodecanol and 7-tetradecanol. Converts 1-dodecanol into 1,5-dodecanediol as major product with very little sub-terminally hydroxylated products with the 1,4-dodecanediol and 1,6-dodecanediol more abundant. Converts dodecanoic acid to 5-hydroxydodecanoic acid which can be further converted into delta-dodecalactone by lactonization of the 5-hydroxy acid at low pH. Also gives sub-terminal hydroxylation of dodecanoic acid with 9-hydroxydodecanoic acid being the second most abundant product. This chain is Self-sufficient cytochrome P450 monooxygenase CYP505E4, found in Penicillium expansum (Blue mold rot fungus).